The following is a 245-amino-acid chain: 4-hydroxy-tetrahydrodipicolinate reductase (245 aa).

NAD(+)-binding positions include 7–12 (GARGKV), 75–77 (GTT), and 102–105 (APNF). His132 serves as the catalytic Proton donor/acceptor. His133 is a (S)-2,3,4,5-tetrahydrodipicolinate binding site. The active-site Proton donor is Lys136. 142–143 (GT) contacts (S)-2,3,4,5-tetrahydrodipicolinate.

The protein belongs to the DapB family.

The protein resides in the cytoplasm. It carries out the reaction (S)-2,3,4,5-tetrahydrodipicolinate + NAD(+) + H2O = (2S,4S)-4-hydroxy-2,3,4,5-tetrahydrodipicolinate + NADH + H(+). The enzyme catalyses (S)-2,3,4,5-tetrahydrodipicolinate + NADP(+) + H2O = (2S,4S)-4-hydroxy-2,3,4,5-tetrahydrodipicolinate + NADPH + H(+). It participates in amino-acid biosynthesis; L-lysine biosynthesis via DAP pathway; (S)-tetrahydrodipicolinate from L-aspartate: step 4/4. Functionally, catalyzes the conversion of 4-hydroxy-tetrahydrodipicolinate (HTPA) to tetrahydrodipicolinate. The polypeptide is 4-hydroxy-tetrahydrodipicolinate reductase (Mycolicibacterium vanbaalenii (strain DSM 7251 / JCM 13017 / BCRC 16820 / KCTC 9966 / NRRL B-24157 / PYR-1) (Mycobacterium vanbaalenii)).